The following is a 391-amino-acid chain: Cystathionine beta-lyase MetC (391 aa).

N6-(pyridoxal phosphate)lysine is present on Lys-196.

This sequence belongs to the trans-sulfuration enzymes family. As to quaternary structure, homotetramer. Pyridoxal 5'-phosphate is required as a cofactor.

It carries out the reaction L,L-cystathionine + H2O = L-homocysteine + pyruvate + NH4(+). It catalyses the reaction an S-substituted L-cysteine + H2O = a thiol + pyruvate + NH4(+). The protein operates within amino-acid biosynthesis; L-methionine biosynthesis via de novo pathway; L-homocysteine from L-cystathionine: step 1/1. With respect to regulation, cystathionine beta-lyase activity is inhibited by sweat components such as glycine, serine and ammonium sulfate. Inhibited by cystathionine at a concentration higher than 6 mM. Its function is as follows. Catalyzes the transformation of cystathionine into homocysteine. Can also catalyze, at low levels, the conversion of cystathionine into methionine and the conversion of methionine into methanethiol. The protein is Cystathionine beta-lyase MetC of Staphylococcus haemolyticus (strain JCSC1435).